The sequence spans 113 residues: Putative increased recombination centers protein 14 (113 aa).

The chain is Putative increased recombination centers protein 14 (IRC14) from Saccharomyces cerevisiae (strain ATCC 204508 / S288c) (Baker's yeast).